The primary structure comprises 493 residues: Transmembrane and coiled-coil domain-containing protein 6 (493 aa).

Positions 15 to 84 (GVEELRRRRR…QRGTEEKERE (70 aa)) form a coiled coil. Helical transmembrane passes span 338–358 (VVAALFILLQFFFQKQPSLLP) and 386–406 (PLLQLLPVSNVVSVMVLTVLC).

The protein resides in the membrane. The sequence is that of Transmembrane and coiled-coil domain-containing protein 6 (TMCO6) from Homo sapiens (Human).